A 408-amino-acid chain; its full sequence is Imidazolonepropionase (408 aa).

His73 and His75 together coordinate Fe(3+). His73 and His75 together coordinate Zn(2+). Arg82, Tyr145, and His178 together coordinate 4-imidazolone-5-propanoate. Tyr145 is an N-formimidoyl-L-glutamate binding site. His243 contributes to the Fe(3+) binding site. His243 is a Zn(2+) binding site. Residue Gln246 participates in 4-imidazolone-5-propanoate binding. Asp318 contacts Fe(3+). Residue Asp318 coordinates Zn(2+). Residues Asn320 and Gly322 each coordinate N-formimidoyl-L-glutamate. Ser323 lines the 4-imidazolone-5-propanoate pocket.

Belongs to the metallo-dependent hydrolases superfamily. HutI family. Zn(2+) serves as cofactor. Fe(3+) is required as a cofactor.

Its subcellular location is the cytoplasm. It catalyses the reaction 4-imidazolone-5-propanoate + H2O = N-formimidoyl-L-glutamate. The protein operates within amino-acid degradation; L-histidine degradation into L-glutamate; N-formimidoyl-L-glutamate from L-histidine: step 3/3. Functionally, catalyzes the hydrolytic cleavage of the carbon-nitrogen bond in imidazolone-5-propanoate to yield N-formimidoyl-L-glutamate. It is the third step in the universal histidine degradation pathway. The polypeptide is Imidazolonepropionase (Shewanella woodyi (strain ATCC 51908 / MS32)).